Consider the following 634-residue polypeptide: Ankyrin repeat and SOCS box protein 2 (634 aa).

In terms of domain architecture, UIM spans 26–45 (SEEELLQMAIEQSLADKTRG). Residues 36 to 82 (EQSLADKTRGPTPAEASASSQTNHQPGHFHPWTRSPSSPENPPARAP) are disordered. 12 ANK repeats span residues 104–133 (AAMDPVLKAIKEGDEEALKIMIQDGKNLAE), 137–167 (EGWLPLHEAAYYGQLGCLKVLQQAYPGTIDQ), 171–200 (QEETALYLATCREHLDCLLSLLQAGAEPDI), 204–233 (SRETPLYKACERKNAEAVRILVRYNADANH), 237–266 (RGWTALHESVSRNDLEVMEILVSGGAKVEA), 270–299 (YSITPLFVAAQSGQLEALRFLAKHGADINT), 303–332 (DSASALYEASKNEHEDVVEFLLSQGADANK), 336–365 (DGLLPLHVASKKGNYRIVQMLLPVTSRTRV), 368–397 (SGISPLHLAAERNHDAVLEALLAARFDVNA), 410–439 (RRSSALYFAVVNNNVYATELLLLAGADPNR), 440–469 (DVISPLLVAIRHGCLRTMQLLLDHGANIDA), and 476–504 (TAFPATIMFAMKCLSLLKFLMDLGCDGEP). The residue at position 371 (serine 371) is a Phosphoserine. In terms of domain architecture, SOCS box spans 580-634 (EDWAVIKEKAEPPRPLAHLCRLRVRKAIGKYRIKLLDTLPLPGRLIRYLKYENTQ).

It belongs to the ankyrin SOCS box (ASB) family. As to quaternary structure, component of a probable ECS E3 ubiquitin-protein ligase complex which contains CUL5, either RBX1 or RNF7/RBX2, Elongin BC complex (ELOB and ELOC) and ASB2. Interacts with SKP2. Through its interaction with SKP2, likely to bridge the formation of dimeric E3-ubiquitin-protein ligase complexes composed of an ECS complex and an SCF(SKP2) complex. Interacts with JAK2; the interaction targets JAK2 for Notch-mediated proteasomal degradation. Interacts with TCF3/E2A; the interaction is mediated by SKP2 and targets TCF3 for Notch-mediated proteasomal degradation. In terms of assembly, interacts with DES. Monoubiquitinated. In terms of processing, not monoubiquitinated. Post-translationally, phosphorylation at Ser-371 is required for association with FLNA and subsequent FLNA degradation. Highest expression in muscle, heart and spleen. Highly expressed in cells of the first and second heart fields in the developing embryonic heart. At 9.5 dpc, robust expression predominantly in the left and right ventricles (RV) and to a lower extent in inflow and outflow tracts. At 10.5 and 11.5 dpc, expression is restricted to the myocardium with no expression observed in the endocardium. In terms of tissue distribution, not expressed in immature dendritic cells. Highly expressed in adult skeletal muscle with very low levels in adult bone marrow. As to expression, expressed in immature dendritic cells and in primary dendritic cells derived from the spleen. Highly expressed in adult bone marrow with negligible levels in adult skeletal muscle. Expressed at higher levels in T helper type 2 (Th2) cells than in regulatory T (Treg) cells, type 1 helper T (Th1) cells and T helper 17 (Th17) cells.

The protein resides in the cytoplasm. The protein localises to the cytoskeleton. Its subcellular location is the stress fiber. It is found in the myofibril. It localises to the sarcomere. The protein resides in the z line. Its pathway is protein modification; protein ubiquitination. In terms of biological role, substrate-recognition component of a SCF-like ECS (Elongin-Cullin-SOCS-box protein) E3 ubiquitin-protein ligase complex which mediates the ubiquitination and subsequent proteasomal degradation of target proteins. Mediates Notch-induced ubiquitination and degradation of substrates including TCF3/E2A and JAK2. Required during embryonic heart development for complete heart looping. Required for cardiomyocyte differentiation. Specifically promotes the ubiquitination of SMAD9 and targets it for proteasomal degradation, leading to avoid excessive accumulation of SMAD9. Plays a role in the regulation of NK-cell migration by modulating protein levels of filamin A/FLNA via regulation of its ubiquitination and proteasome degradation. Its function is as follows. Involved in myogenic differentiation and targets filamin FLNB for proteasomal degradation but not filamin FLNA. Also targets DES for proteasomal degradation. Acts as a negative regulator of skeletal muscle mass. Targets filamins FLNA and FLNB for proteasomal degradation. This leads to enhanced adhesion of hematopoietic cells to fibronectin. Required for FLNA degradation in immature cardiomyocytes which is necessary for actin cytoskeleton remodeling, leading to proper organization of myofibrils and function of mature cardiomyocytes. Required for degradation of FLNA and FLNB in immature dendritic cells (DC) which enhances immature DC migration by promoting DC podosome formation and DC-mediated degradation of the extracellular matrix. Does not promote proteasomal degradation of tyrosine-protein kinases JAK1 or JAK2 in hematopoietic cells. The sequence is that of Ankyrin repeat and SOCS box protein 2 from Mus musculus (Mouse).